The primary structure comprises 137 residues: Large ribosomal subunit protein uL16c (137 aa).

This sequence belongs to the universal ribosomal protein uL16 family. As to quaternary structure, part of the 50S ribosomal subunit.

Its subcellular location is the plastid. In Cuscuta reflexa (Southern Asian dodder), this protein is Large ribosomal subunit protein uL16c.